The primary structure comprises 380 residues: UDP-N-acetylglucosamine 2-epimerase (380 aa).

Belongs to the UDP-N-acetylglucosamine 2-epimerase family.

Its subcellular location is the cytoplasm. It catalyses the reaction UDP-N-acetyl-alpha-D-glucosamine = UDP-N-acetyl-alpha-D-mannosamine. Its pathway is cell wall biogenesis; poly(glycerol phosphate) teichoic acid biosynthesis. Its function is as follows. Catalyzes the conversion of UDP-N-acetylglucosamine into UDP-N-acetylmannosamine, a precursor of the teichoic acid linkage unit. This chain is UDP-N-acetylglucosamine 2-epimerase (mnaA), found in Bacillus subtilis (strain 168).